The chain runs to 465 residues: Argininosuccinate lyase (465 aa).

The protein belongs to the lyase 1 family. Argininosuccinate lyase subfamily.

It is found in the cytoplasm. It catalyses the reaction 2-(N(omega)-L-arginino)succinate = fumarate + L-arginine. It participates in amino-acid biosynthesis; L-arginine biosynthesis; L-arginine from L-ornithine and carbamoyl phosphate: step 3/3. This Methanosphaera stadtmanae (strain ATCC 43021 / DSM 3091 / JCM 11832 / MCB-3) protein is Argininosuccinate lyase.